The following is a 223-amino-acid chain: Lipoprotein-releasing system ATP-binding protein LolD (223 aa).

Residues 1-223 (MAKVFRSGST…DEVEPQSLPA (223 aa)) form the ABC transporter domain. ATP is bound at residue 32–39 (GDSGSGKS).

This sequence belongs to the ABC transporter superfamily. Lipoprotein translocase (TC 3.A.1.125) family. As to quaternary structure, the complex is composed of two ATP-binding proteins (LolD) and two transmembrane proteins (LolC and LolE).

Its subcellular location is the cell inner membrane. Its function is as follows. Part of the ABC transporter complex LolCDE involved in the translocation of mature outer membrane-directed lipoproteins, from the inner membrane to the periplasmic chaperone, LolA. Responsible for the formation of the LolA-lipoprotein complex in an ATP-dependent manner. The polypeptide is Lipoprotein-releasing system ATP-binding protein LolD (Koribacter versatilis (strain Ellin345)).